A 675-amino-acid polypeptide reads, in one-letter code: Putative L-type lectin-domain containing receptor kinase I.11 (675 aa).

Residues 1–22 (MASERLHLILLVFFNHLTFLLS) form the signal peptide. Residues 23-292 (QQEEAGFIYN…PKAKQEQTSP (270 aa)) are Extracellular-facing. The tract at residues 27 to 263 (AGFIYNGFGQ…YQYILGWSFS (237 aa)) is legume-lectin like. Asn-60, Asn-129, Asn-186, Asn-209, and Asn-230 each carry an N-linked (GlcNAc...) asparagine glycan. The chain crosses the membrane as a helical span at residues 293-313 (LLIVLLMLLVLIMLAVLGGIY). Over 314–675 (LYRRKKYAEV…THTITYGDGR (362 aa)) the chain is Cytoplasmic. The 273-residue stretch at 348–620 (FDKDGRLGKG…QVIQYINQNL (273 aa)) folds into the Protein kinase domain. ATP is bound by residues 354 to 362 (LGKGGFGEV) and Lys-376. Asp-472 acts as the Proton acceptor in catalysis.

This sequence in the C-terminal section; belongs to the protein kinase superfamily. Ser/Thr protein kinase family. In the N-terminal section; belongs to the leguminous lectin family.

It localises to the cell membrane. It carries out the reaction L-seryl-[protein] + ATP = O-phospho-L-seryl-[protein] + ADP + H(+). The enzyme catalyses L-threonyl-[protein] + ATP = O-phospho-L-threonyl-[protein] + ADP + H(+). In Arabidopsis thaliana (Mouse-ear cress), this protein is Putative L-type lectin-domain containing receptor kinase I.11 (LECRK111).